The following is a 307-amino-acid chain: Pantothenate kinase (307 aa).

Gly-90–Ser-97 provides a ligand contact to ATP.

This sequence belongs to the prokaryotic pantothenate kinase family.

It is found in the cytoplasm. It catalyses the reaction (R)-pantothenate + ATP = (R)-4'-phosphopantothenate + ADP + H(+). The protein operates within cofactor biosynthesis; coenzyme A biosynthesis; CoA from (R)-pantothenate: step 1/5. The polypeptide is Pantothenate kinase (Limosilactobacillus reuteri subsp. reuteri (strain JCM 1112) (Lactobacillus reuteri)).